The primary structure comprises 507 residues: ATP synthase subunit alpha, chloroplastic (507 aa).

An ATP-binding site is contributed by 170 to 177; that stretch reads GDRQTGKT.

Belongs to the ATPase alpha/beta chains family. As to quaternary structure, F-type ATPases have 2 components, CF(1) - the catalytic core - and CF(0) - the membrane proton channel. CF(1) has five subunits: alpha(3), beta(3), gamma(1), delta(1), epsilon(1). CF(0) has four main subunits: a, b, b' and c.

It localises to the plastid. Its subcellular location is the chloroplast thylakoid membrane. The enzyme catalyses ATP + H2O + 4 H(+)(in) = ADP + phosphate + 5 H(+)(out). Produces ATP from ADP in the presence of a proton gradient across the membrane. The alpha chain is a regulatory subunit. This chain is ATP synthase subunit alpha, chloroplastic, found in Silene latifolia (White campion).